A 284-amino-acid polypeptide reads, in one-letter code: RNase adapter protein RapZ (284 aa).

8-15 (GRSGSGKS) lines the ATP pocket. 56 to 59 (DVRN) is a binding site for GTP. An RNA-binding region spans residues 266 to 284 (RSRGKNVQSRHRTLEKRKT).

Belongs to the RapZ-like family. RapZ subfamily. In terms of assembly, homotrimer.

In terms of biological role, modulates the synthesis of GlmS, by affecting the processing and stability of the regulatory small RNA GlmZ. When glucosamine-6-phosphate (GlcN6P) concentrations are high in the cell, RapZ binds GlmZ and targets it to cleavage by RNase E. Consequently, GlmZ is inactivated and unable to activate GlmS synthesis. Under low GlcN6P concentrations, RapZ is sequestered and inactivated by an other regulatory small RNA, GlmY, preventing GlmZ degradation and leading to synthesis of GlmS. This Escherichia fergusonii (strain ATCC 35469 / DSM 13698 / CCUG 18766 / IAM 14443 / JCM 21226 / LMG 7866 / NBRC 102419 / NCTC 12128 / CDC 0568-73) protein is RNase adapter protein RapZ.